The sequence spans 163 residues: Nucleotide-binding protein Tery_2743 (163 aa).

Belongs to the YajQ family.

Nucleotide-binding protein. The protein is Nucleotide-binding protein Tery_2743 of Trichodesmium erythraeum (strain IMS101).